We begin with the raw amino-acid sequence, 463 residues long: Asparagine--tRNA ligase (463 aa).

Belongs to the class-II aminoacyl-tRNA synthetase family. In terms of assembly, homodimer.

It is found in the cytoplasm. It catalyses the reaction tRNA(Asn) + L-asparagine + ATP = L-asparaginyl-tRNA(Asn) + AMP + diphosphate + H(+). The sequence is that of Asparagine--tRNA ligase from Clostridium tetani (strain Massachusetts / E88).